The following is a 451-amino-acid chain: UPF0210 protein LMOf2365_0563 (451 aa).

It belongs to the UPF0210 family. Homodimer.

The protein is UPF0210 protein LMOf2365_0563 of Listeria monocytogenes serotype 4b (strain F2365).